Reading from the N-terminus, the 142-residue chain is Cytidine deaminase (142 aa).

The 131-residue stretch at 9–139 folds into the CMP/dCMP-type deaminase domain; it reads RQLEALKRAA…ELLPMAFGPS (131 aa). 50-52 contacts substrate; that stretch reads NVE. C61 serves as a coordination point for Zn(2+). Residue E63 is the Proton donor of the active site. The Zn(2+) site is built by C96 and C99.

The protein belongs to the cytidine and deoxycytidylate deaminase family. In terms of assembly, homodimer. Zn(2+) serves as cofactor.

It carries out the reaction cytidine + H2O + H(+) = uridine + NH4(+). The enzyme catalyses 2'-deoxycytidine + H2O + H(+) = 2'-deoxyuridine + NH4(+). In terms of biological role, this enzyme scavenges exogenous and endogenous cytidine and 2'-deoxycytidine for UMP synthesis. The sequence is that of Cytidine deaminase (CDD1) from Saccharomyces cerevisiae (strain ATCC 204508 / S288c) (Baker's yeast).